The chain runs to 267 residues: 2-keto-3-deoxy-L-rhamnonate aldolase (267 aa).

His49 serves as the catalytic Proton acceptor. Gln151 provides a ligand contact to substrate. Glu153 is a binding site for Mg(2+). Substrate-binding residues include Ala178 and Asp179. Asp179 is a binding site for Mg(2+).

It belongs to the HpcH/HpaI aldolase family. KDR aldolase subfamily. In terms of assembly, homohexamer. Requires Mg(2+) as cofactor.

The enzyme catalyses 2-dehydro-3-deoxy-L-rhamnonate = (S)-lactaldehyde + pyruvate. Its function is as follows. Catalyzes the reversible retro-aldol cleavage of 2-keto-3-deoxy-L-rhamnonate (KDR) to pyruvate and lactaldehyde. The chain is 2-keto-3-deoxy-L-rhamnonate aldolase from Escherichia coli O157:H7.